We begin with the raw amino-acid sequence, 270 residues long: Bis(5'-nucleosyl)-tetraphosphatase, symmetrical (270 aa).

Belongs to the Ap4A hydrolase family.

It carries out the reaction P(1),P(4)-bis(5'-adenosyl) tetraphosphate + H2O = 2 ADP + 2 H(+). In terms of biological role, hydrolyzes diadenosine 5',5'''-P1,P4-tetraphosphate to yield ADP. The polypeptide is Bis(5'-nucleosyl)-tetraphosphatase, symmetrical (Thioalkalivibrio sulfidiphilus (strain HL-EbGR7)).